The primary structure comprises 602 residues: MASAHIEHKLSLLPDLPGSYQMKDINGKIIYVGKAKNLKNRVRSYFKSSHDGKVAAMVSQVADFDFIVTSTDKEAFLLEITLIQKYQPYYNIKLKKGTGYPYIKITHERDPKIEITGTIRKDGGYYFGPYPNVYAAQETMHFIQKVYPLRRCNGYQGRPCLYYHMGQCLGACFRTVPEKEYTDQIERIKRFLNGNVGKAKASLTAKMERAAKNLQFERAAEIRDQLHYIEQTVEKQKIISHDNTTRDLFNFYMDKGWISIQVFFIRQARLMKRESRLFPVVNTAKEEFESFILQFYSRKNNVKPREVLVPAALDNKVLADILEIPVRTPQRGEKRDLMALAAKNSQIKLEDKFRLMELDNRTTIGAMKELMAALNLPMGHVAEAFDHSHIQGADPVSAMVQFVDGQPAKNNYRKYKLDADKTHNGADEAANTREVIRRRYTRLLKERAPLPDLILMDGGEIEMNAAKDVLENELNLDIPVAGMVKNNKHKTAALLFGNADQLINLDPKSQGFYLLERIQDEVHRFAITFHRQLHAKNSLASRLEGIKGVGPKTRLKLLRKFKTINKIKEAPLEDIQELGISKKVAQALKLSLTAEPTPARRV.

The GIY-YIG domain occupies 15-92 (DLPGSYQMKD…IQKYQPYYNI (78 aa)). The 36-residue stretch at 197-232 (GKAKASLTAKMERAAKNLQFERAAEIRDQLHYIEQT) folds into the UVR domain.

The protein belongs to the UvrC family. As to quaternary structure, interacts with UvrB in an incision complex.

The protein localises to the cytoplasm. Its function is as follows. The UvrABC repair system catalyzes the recognition and processing of DNA lesions. UvrC both incises the 5' and 3' sides of the lesion. The N-terminal half is responsible for the 3' incision and the C-terminal half is responsible for the 5' incision. This chain is UvrABC system protein C, found in Lacticaseibacillus casei (strain BL23) (Lactobacillus casei).